Consider the following 312-residue polypeptide: Ribosomal RNA small subunit methyltransferase H (312 aa).

Residues 33 to 35, aspartate 52, phenylalanine 81, aspartate 102, and glutamine 109 contribute to the S-adenosyl-L-methionine site; that span reads GGH.

This sequence belongs to the methyltransferase superfamily. RsmH family.

It localises to the cytoplasm. The enzyme catalyses cytidine(1402) in 16S rRNA + S-adenosyl-L-methionine = N(4)-methylcytidine(1402) in 16S rRNA + S-adenosyl-L-homocysteine + H(+). Its function is as follows. Specifically methylates the N4 position of cytidine in position 1402 (C1402) of 16S rRNA. The chain is Ribosomal RNA small subunit methyltransferase H from Leuconostoc mesenteroides subsp. mesenteroides (strain ATCC 8293 / DSM 20343 / BCRC 11652 / CCM 1803 / JCM 6124 / NCDO 523 / NBRC 100496 / NCIMB 8023 / NCTC 12954 / NRRL B-1118 / 37Y).